The primary structure comprises 101 residues: Small ribosomal subunit protein uS14 (101 aa).

Residues 1-11 show a composition bias toward basic and acidic residues; it reads MAKKSAIETNE. Residues 1 to 24 are disordered; that stretch reads MAKKSAIETNERRRKLSQSKAAKR. Residues 12-24 show a composition bias toward basic residues; sequence RRRKLSQSKAAKR.

The protein belongs to the universal ribosomal protein uS14 family. As to quaternary structure, part of the 30S ribosomal subunit. Contacts proteins S3 and S10.

Functionally, binds 16S rRNA, required for the assembly of 30S particles and may also be responsible for determining the conformation of the 16S rRNA at the A site. The protein is Small ribosomal subunit protein uS14 of Azorhizobium caulinodans (strain ATCC 43989 / DSM 5975 / JCM 20966 / LMG 6465 / NBRC 14845 / NCIMB 13405 / ORS 571).